The following is a 154-amino-acid chain: Myoglobin (154 aa).

A Globin domain is found at 2–148; that stretch reads GLSDGEWQLV…FRNDIAAKYK (147 aa). Position 4 is a phosphoserine (Ser-4). A nitrite-binding site is contributed by His-65. His-65 is a binding site for O2. Thr-68 carries the post-translational modification Phosphothreonine. His-94 serves as a coordination point for heme b.

Belongs to the globin family. As to quaternary structure, monomeric.

It is found in the cytoplasm. The protein localises to the sarcoplasm. It catalyses the reaction Fe(III)-heme b-[protein] + nitric oxide + H2O = Fe(II)-heme b-[protein] + nitrite + 2 H(+). The enzyme catalyses H2O2 + AH2 = A + 2 H2O. In terms of biological role, monomeric heme protein which primary function is to store oxygen and facilitate its diffusion within muscle tissues. Reversibly binds oxygen through a pentacoordinated heme iron and enables its timely and efficient release as needed during periods of heightened demand. Depending on the oxidative conditions of tissues and cells, and in addition to its ability to bind oxygen, it also has a nitrite reductase activity whereby it regulates the production of bioactive nitric oxide. Under stress conditions, like hypoxia and anoxia, it also protects cells against reactive oxygen species thanks to its pseudoperoxidase activity. The sequence is that of Myoglobin (MB) from Meles meles (Eurasian badger).